Here is a 409-residue protein sequence, read N- to C-terminus: Methylthioribose-1-phosphate isomerase (409 aa).

The active-site Proton donor is the Asp277.

This sequence belongs to the eIF-2B alpha/beta/delta subunits family. MtnA subfamily.

The protein resides in the cytoplasm. The protein localises to the nucleus. It catalyses the reaction 5-(methylsulfanyl)-alpha-D-ribose 1-phosphate = 5-(methylsulfanyl)-D-ribulose 1-phosphate. The protein operates within amino-acid biosynthesis; L-methionine biosynthesis via salvage pathway; L-methionine from S-methyl-5-thio-alpha-D-ribose 1-phosphate: step 1/6. In terms of biological role, catalyzes the interconversion of methylthioribose-1-phosphate (MTR-1-P) into methylthioribulose-1-phosphate (MTRu-1-P). The polypeptide is Methylthioribose-1-phosphate isomerase (Scheffersomyces stipitis (strain ATCC 58785 / CBS 6054 / NBRC 10063 / NRRL Y-11545) (Yeast)).